Consider the following 366-residue polypeptide: MGVLAACVLGLLGGLHGSRVEETEEMEMMKEMHEKALDCRFDRSKMEEMERSLERTVGFDTKVLIPVIFHGSKVVASPVTRYWEIEKEERRYTERVIKLLPGLAWHLMVCVYVEGCGDWISDLTHKVFSATSFWRPDLVALYKNGKKRDGMKFVDLVVEVFRRNRCMVGRFGDSLARLAEARLQRISGSLSPGERKKEEEMLWKIKEYGERLCTEKRQEEIVKAQKIMCDACAYIWGRESDRRSFLLEAYSKHLCLRMVDPSVGVEGLLAHCMGHSKLIRTYEEHQVDVAGELVLQVFLGNKDIDDESINNAVREVRERKEAERIRKEEKRIRKEEERAKNEEELLRMVESEEGKSGEGEEGCRRG.

The interval 325–366 (IRKEEKRIRKEEERAKNEEELLRMVESEEGKSGEGEEGCRRG) is disordered.

The protein belongs to the UPF0329 family.

The chain is UPF0329 protein ECU01_0130/ECU01_1480/ECU08_0060 from Encephalitozoon cuniculi (strain GB-M1) (Microsporidian parasite).